The sequence spans 170 residues: Peptide deformylase 2 (170 aa).

The Fe cation site is built by Cys-94 and His-136. The active site involves Glu-137. His-140 serves as a coordination point for Fe cation.

Belongs to the polypeptide deformylase family. Fe(2+) is required as a cofactor.

The catalysed reaction is N-terminal N-formyl-L-methionyl-[peptide] + H2O = N-terminal L-methionyl-[peptide] + formate. Its function is as follows. Removes the formyl group from the N-terminal Met of newly synthesized proteins. Requires at least a dipeptide for an efficient rate of reaction. N-terminal L-methionine is a prerequisite for activity but the enzyme has broad specificity at other positions. This is Peptide deformylase 2 from Xanthomonas campestris pv. campestris (strain ATCC 33913 / DSM 3586 / NCPPB 528 / LMG 568 / P 25).